A 175-amino-acid polypeptide reads, in one-letter code: Large ribosomal subunit protein uL22y (175 aa).

Over residues 153–163 (EKEEPVKKEPE) the composition is skewed to basic and acidic residues. Positions 153–175 (EKEEPVKKEPETQLAAKSKKSAA) are disordered.

Belongs to the universal ribosomal protein uL22 family.

This chain is Large ribosomal subunit protein uL22y (RPL17B), found in Arabidopsis thaliana (Mouse-ear cress).